A 266-amino-acid chain; its full sequence is GFP-like fluorescent chromoprotein cFP484 (266 aa).

Residues 104-106 (QYG) constitute a cross-link (2-iminomethyl-5-imidazolinone (Gln-Gly)). Tyr-105 carries the post-translational modification 2,3-didehydrotyrosine.

Belongs to the GFP family. In terms of processing, contains a chromophore consisting of modified amino acid residues. The chromophore is formed by autocatalytic backbone condensation between Xaa-N and Gly-(N+2), oxidation of Tyr-(N+1) to didehydrotyrosine, and formation of a double bond to the alpha-amino nitrogen of residue Xaa-N. Maturation of the chromophore requires nothing other than molecular oxygen. The precise stereochemistry of the tyrosine has not been determined. Tentacle and oral disk.

Pigment protein that is green in color. This chain is GFP-like fluorescent chromoprotein cFP484, found in Clavularia sp. (Brown star polyp).